The sequence spans 286 residues: Cytotoxin (286 aa).

Residues 267-286 (TFYNYASLVPDLETRVRSAE) constitute a propeptide that is removed on maturation.

It belongs to the aerolysin family.

It localises to the secreted. In terms of biological role, cytotoxin is thought to form hydrophilic pores in cell membranes. The protein is Cytotoxin (ctx) of Pseudomonas aeruginosa.